A 273-amino-acid polypeptide reads, in one-letter code: MAVVKCKPTSPGRRHVVKVVNPELHKGKPYAPLLEKNSKSGGRNNNGRITTRHIGGGHKQQYRLIDFKRNKDGIPAVVERLEYDPNRSANIALVLYKDGERRYILAPKGLKAGDQIQSGVDAAIKAGNTLPMRNIPVGSTVHNVEMKPGKGGQLARSAGTYVQIVARDGSYVTLRLRSGEMRKVESDCRATLGEVGNAEHMLRVLGKAGAARWRGVRPTVRGTAMNPVDHPHGGGEGRNFGKHPVSPWGLQTKGKKTRSNKRTDKFIVRRRTK.

Disordered stretches follow at residues 28–54 (KPYA…TRHI) and 221–273 (RGTA…RRTK). Over residues 39-48 (KSGGRNNNGR) the composition is skewed to low complexity.

This sequence belongs to the universal ribosomal protein uL2 family. In terms of assembly, part of the 50S ribosomal subunit. Forms a bridge to the 30S subunit in the 70S ribosome.

In terms of biological role, one of the primary rRNA binding proteins. Required for association of the 30S and 50S subunits to form the 70S ribosome, for tRNA binding and peptide bond formation. It has been suggested to have peptidyltransferase activity; this is somewhat controversial. Makes several contacts with the 16S rRNA in the 70S ribosome. This is Large ribosomal subunit protein uL2 from Pectobacterium carotovorum subsp. carotovorum (strain PC1).